Here is a 423-residue protein sequence, read N- to C-terminus: UDP-N-acetylglucosamine 1-carboxyvinyltransferase (423 aa).

22–23 contributes to the phosphoenolpyruvate binding site; the sequence is KN. Arg-93 is a UDP-N-acetyl-alpha-D-glucosamine binding site. The Proton donor role is filled by Cys-117. Position 117 is a 2-(S-cysteinyl)pyruvic acid O-phosphothioketal (Cys-117). Residues 122–126, Asp-308, and Ile-330 each bind UDP-N-acetyl-alpha-D-glucosamine; that span reads RPVDL.

The protein belongs to the EPSP synthase family. MurA subfamily.

The protein localises to the cytoplasm. It catalyses the reaction phosphoenolpyruvate + UDP-N-acetyl-alpha-D-glucosamine = UDP-N-acetyl-3-O-(1-carboxyvinyl)-alpha-D-glucosamine + phosphate. The protein operates within cell wall biogenesis; peptidoglycan biosynthesis. In terms of biological role, cell wall formation. Adds enolpyruvyl to UDP-N-acetylglucosamine. This is UDP-N-acetylglucosamine 1-carboxyvinyltransferase from Maricaulis maris (strain MCS10) (Caulobacter maris).